The primary structure comprises 806 residues: Phenylalanine--tRNA ligase beta subunit (806 aa).

A tRNA-binding domain is found at 40-155 (NKGVKGVVVG…SDAEVGADAL (116 aa)). A B5 domain is found at 409–484 (VQERTVSVTA…RLYGYDHIPV (76 aa)). Mg(2+)-binding residues include Asp462, Asp468, Glu471, and Glu472. The 94-residue stretch at 712–805 (PRFPSMTRDM…VEEKFGAELR (94 aa)) folds into the FDX-ACB domain.

This sequence belongs to the phenylalanyl-tRNA synthetase beta subunit family. Type 1 subfamily. In terms of assembly, tetramer of two alpha and two beta subunits. The cofactor is Mg(2+).

The protein resides in the cytoplasm. The enzyme catalyses tRNA(Phe) + L-phenylalanine + ATP = L-phenylalanyl-tRNA(Phe) + AMP + diphosphate + H(+). This is Phenylalanine--tRNA ligase beta subunit from Bacillus thuringiensis subsp. konkukian (strain 97-27).